The chain runs to 117 residues: Large ribosomal subunit protein bL20c (117 aa).

The protein belongs to the bacterial ribosomal protein bL20 family.

The protein localises to the plastid. Its subcellular location is the chloroplast. Its function is as follows. Binds directly to 23S ribosomal RNA and is necessary for the in vitro assembly process of the 50S ribosomal subunit. It is not involved in the protein synthesizing functions of that subunit. The chain is Large ribosomal subunit protein bL20c from Morus indica (Mulberry).